We begin with the raw amino-acid sequence, 2022 residues long: Transient receptor potential cation channel subfamily M member 6 (2022 aa).

At 1 to 741 (MKEQPVLERL…MWMGRLKMRK (741 aa)) the chain is on the cytoplasmic side. The chain crosses the membrane as a helical span at residues 742–762 (NSWLKIIISIILPPTILTLEF). The Extracellular segment spans residues 763–841 (KSKAEMSHVP…YEFYSAPIVK (79 aa)). A helical membrane pass occupies residues 842-862 (FWFYTMAYLAFLMLFTYTVLV). At 863 to 905 (EMQPQPSVQEWLVSIYIFTNAIEVVREICISEPGKFTQKVKVW) the chain is on the cytoplasmic side. A helical membrane pass occupies residues 906–926 (ISEYWNLTETVAIGLFSAGFV). At 927-939 (LRWGDPPFHTAGR) the chain is on the extracellular side. Residues 940–960 (LIYCIDIIFWFSRLLDFFAVN) form a helical membrane-spanning segment. The Cytoplasmic segment spans residues 961–972 (QHAGPYVTMIAK). Residues 973–993 (MTANMFYIVIIMAIVLLSFGV) traverse the membrane as a helical segment. Residues 994 to 1012 (ARKAILSPKEPPSWSLARD) lie on the Extracellular side of the membrane. Residues 1013 to 1033 (IVFEPYWMIYGEVYAGEIDVC) constitute an intramembrane region (pore-forming). At 1034-1047 (SSQPSCPPGSFLTP) the chain is on the extracellular side. A helical membrane pass occupies residues 1048-1068 (FLQAVYLFVQYIIMVNLLIAF). Over 1069–2022 (FNNVYLDMES…RNSPEDDMQL (954 aa)) the chain is Cytoplasmic. The interval 1479 to 1516 (TCDSDSSRSEQHQKQAQDSSLSDNSTRSAQSSECSEVG) is disordered. A compositionally biased stretch (basic and acidic residues) spans 1483-1493 (DSSRSEQHQKQ). A compositionally biased stretch (polar residues) spans 1494 to 1512 (AQDSSLSDNSTRSAQSSEC). One can recognise an Alpha-type protein kinase domain in the interval 1750-1980 (NLDKSMSSWS…CCRKLKLPDL (231 aa)). ADP is bound by residues G1777, G1778, L1779, R1780, and K1804. A Phosphothreonine; by autocatalysis modification is found at T1851. ADP contacts are provided by E1876 and M1879. H1909 is a binding site for Zn(2+). D1923 serves as the catalytic Proton acceptor. D1933 contacts ADP. 3 residues coordinate Zn(2+): H1966, C1968, and C1972. The segment at 1997–2022 (EIKIESAEEPPARETGRNSPEDDMQL) is disordered. Basic and acidic residues predominate over residues 1998-2016 (IKIESAEEPPARETGRNSP).

In the C-terminal section; belongs to the protein kinase superfamily. Alpha-type protein kinase family. ALPK subfamily. It in the N-terminal section; belongs to the transient receptor (TC 1.A.4) family. LTrpC subfamily. TRPM6 sub-subfamily. In terms of assembly, homomers. Forms heteromers with TRPM7; TRPM6 increases the current amplitude of TRPM6/7 heteromers as compared to TRPM7 homomer. Interacts (via kinase domain) with RACK1. In terms of processing, autophosphorylated; autophosphorylation controlls the protein kinase activity of TRPM6 towards their substrates. Autophosphorylation of Thr-1851 in the kinase domain is essential for the inhibitory effect of RACK1. Post-translationally, the C-terminus of TRPM6 is proteolytically cleaved in vivo, in a cell type-specific fashion, releasing the kinase module from the transmembrane domain. The cleaved kinase fragments are translocated to the nucleus to phosphorylate histones and regulate gene expression. Highly expressed in kidney and colon. Isoform TRPM6a and isoform TRPM6b, are coexpressed with TRPM7 in kidney, and testis, and are also found in several cell lines of lung origin. Isoform TRPM6c is detected only in testis and in NCI-H510A small cell lung carcinoma cells.

The protein localises to the cell membrane. The protein resides in the apical cell membrane. Its subcellular location is the nucleus. It carries out the reaction L-seryl-[protein] + ATP = O-phospho-L-seryl-[protein] + ADP + H(+). It catalyses the reaction L-threonyl-[protein] + ATP = O-phospho-L-threonyl-[protein] + ADP + H(+). The catalysed reaction is Mg(2+)(in) = Mg(2+)(out). The enzyme catalyses Ca(2+)(in) = Ca(2+)(out). It carries out the reaction Zn(2+)(in) = Zn(2+)(out). Strongly inhibited by intracellular Mg(2+); unlikely to be active at physiological levels of intracellular Mg(2+). In the heteromeric TRPM6-TRPM7 channels complexes, TRPM7 are able to offset the very high sensitivity of TRPM6 to cytosolic Mg(2+) to physiologically relevant concentrations, whereas TRPM6 relieve TRPM7 from the inhibitory action of Mg-ATP. Consequently, the association of TRPM6 with TRPM7 allow for high constitutive activity of TRPM6/7 in the presence of physiological levels of Mg(2+) and Mg-ATP. The kinase activity is controlled through the autophosphorylation of a serine/threonine-rich region located to the N-terminal of the catalytic domain. Functionally, bifunctional protein that combines an ion channel with an intrinsic kinase domain, enabling it to modulate cellular functions either by conducting ions through the pore or by phosphorylating downstream proteins via its kinase domain. Crucial for Mg(2+) homeostasis. Has an important role in epithelial Mg(2+) transport and in the active Mg(2+) absorption in the gut and kidney. However, whether TRPM6 forms functional homomeric channels by itself or functions primarily as a subunit of heteromeric TRPM6-TRPM7 channels, is still under debate. Its function is as follows. The C-terminal kinase domain can be cleaved from the channel segment in a cell-type-specific fashion. The cleaved kinase fragments can translocate to the nucleus, and bind chromatin-remodeling complex proteins to ultimately phosphorylate specific Ser/Thr residues of histones known to be functionally important for cell differentiation and development. This Homo sapiens (Human) protein is Transient receptor potential cation channel subfamily M member 6 (TRPM6).